The chain runs to 244 residues: MFKAELSDSSILKTSFDAISSIVDEVQIQTDSEGMRLDALDRSHITFVHLELKASLFDEYVCDVPEKINIDTGEFMSVLKRAKSQDRVIMSLDEGNFIITFEGDATRTFKIRLIDIEYDNPTPPELEHPASFKVHFGILKDAINDIDIFSDKIALQVDEDYFRASADGEFGDASVKYLHGENINTQEKSLFSLDKIREMLKADKFSEEAEIGLGTDMPLKLTLNMVTGDGKLSFLLAPRLESDE.

This sequence belongs to the PCNA family. Homotrimer. The subunits circularize to form a toroid; DNA passes through its center. Replication factor C (RFC) is required to load the toroid on the DNA.

Sliding clamp subunit that acts as a moving platform for DNA processing. Responsible for tethering the catalytic subunit of DNA polymerase and other proteins to DNA during high-speed replication. The chain is DNA polymerase sliding clamp from Methanobrevibacter smithii (strain ATCC 35061 / DSM 861 / OCM 144 / PS).